We begin with the raw amino-acid sequence, 37 residues long: Cytochrome b6-f complex subunit 5 (37 aa).

Residues 5 to 25 (LLSGIILGLIPITICGLFFTA) form a helical membrane-spanning segment.

This sequence belongs to the PetG family. The 4 large subunits of the cytochrome b6-f complex are cytochrome b6, subunit IV (17 kDa polypeptide, PetD), cytochrome f and the Rieske protein, while the 4 small subunits are PetG, PetL, PetM and PetN. The complex functions as a dimer.

It localises to the plastid. The protein localises to the chloroplast thylakoid membrane. Functionally, component of the cytochrome b6-f complex, which mediates electron transfer between photosystem II (PSII) and photosystem I (PSI), cyclic electron flow around PSI, and state transitions. PetG is required for either the stability or assembly of the cytochrome b6-f complex. The sequence is that of Cytochrome b6-f complex subunit 5 from Euglena gracilis.